We begin with the raw amino-acid sequence, 581 residues long: Guanine nucleotide-binding protein-like 3 homolog (581 aa).

The span at 1–49 (MALKRLKTKKSKRLTGRLKHKIEKKVRDHNKKERRAAKKNPKKGSKKQK) shows a compositional bias: basic residues. Residues 1–50 (MALKRLKTKKSKRLTGRLKHKIEKKVRDHNKKERRAAKKNPKKGSKKQKL) form a disordered region. Residues 64-108 (LKEVEEAKQRQEAERLARREAFKAEREQNKFKTLESMVEDADMRS) are a coiled coil. Phosphoserine is present on Ser99. One can recognise a CP-type G domain in the interval 141–325 (FKEFRKVIEN…LIDCPGIVFT (185 aa)). Residues 189 to 192 (NKAD), 274 to 281 (GIPNVGKS), and 318 to 321 (DCPG) contribute to the GTP site. The segment covering 500–517 (KPAKGRKRKLDEEKEKVD) has biased composition (basic and acidic residues). The interval 500 to 519 (KPAKGRKRKLDEEKEKVDPS) is disordered.

This sequence belongs to the TRAFAC class YlqF/YawG GTPase family.

It is found in the nucleus. It localises to the nucleolus. May play a role in regulating cellular proliferation. The sequence is that of Guanine nucleotide-binding protein-like 3 homolog (Ns1) from Drosophila melanogaster (Fruit fly).